The following is a 451-amino-acid chain: Ammonium transporter Rh type B (451 aa).

The Cytoplasmic portion of the chain corresponds to 1 to 11; it reads MADVSTSMRLK. Residues 12-32 traverse the membrane as a helical segment; it reads LPVVCFILEIILIILFGALVQ. Residues 33–63 are Extracellular-facing; it reads YDYETDAKEWHNQSHNDYENDFYFRYPSFQD. N-linked (GlcNAc...) asparagine glycosylation occurs at asparagine 44. The helical transmembrane segment at 64-84 threads the bilayer; sequence VHVMIFIGFGFLMTFLQKYGF. Residues 85–87 are Cytoplasmic-facing; that stretch reads GSV. The helical transmembrane segment at 88–108 threads the bilayer; that stretch reads GFNFLIAAFSLQWATLMQGFF. The Extracellular segment spans residues 109–121; that stretch reads HGMHGGKIHVGVE. Residues 122 to 142 traverse the membrane as a helical segment; sequence SMINADFCTGSVLISFGAVLG. Residues 143 to 151 are Cytoplasmic-facing; that stretch reads KTSPIQLLT. A helical membrane pass occupies residues 152-172; that stretch reads MAMFEVTLFAVNEFILLSLLG. The Extracellular portion of the chain corresponds to 173–176; sequence TRDA. The chain crosses the membrane as a helical span at residues 177–197; the sequence is GGSMTIHTFGAYFGLMVTRIL. The Cytoplasmic segment spans residues 198 to 216; it reads YRPHLDKSKHRNSSVYHSD. A helical membrane pass occupies residues 217-237; the sequence is LFAMIGTIYLWMFWPSFNSAI. The Extracellular segment spans residues 238-247; that stretch reads TAHGDDQHRT. The chain crosses the membrane as a helical span at residues 248–270; that stretch reads ALNTYYSLAACTLATYGMSAVTS. The Cytoplasmic segment spans residues 271–274; sequence HDGK. Residues 275–295 traverse the membrane as a helical segment; sequence LDMVHIQNAALAGGVAVGTAG. The Extracellular segment spans residues 296–298; it reads EMM. Residues 299-319 form a helical membrane-spanning segment; the sequence is LTPFGSMIVGFLAGIISVLGF. The Cytoplasmic segment spans residues 320–340; sequence KFLSPILESKLKIQDTCGVHN. A helical membrane pass occupies residues 341 to 361; sequence LHGMPGVLGAIVGAVTAALAT. Over 362 to 390 the chain is Extracellular; that stretch reads MDVYGKGMEDVFPAVADGSIDASKQGGVQ. Residues 391-411 form a helical membrane-spanning segment; that stretch reads ALSLAITLGIALLGGLIVVFG. The Cytoplasmic portion of the chain corresponds to 412 to 451; it reads TPPDTLCFEDGVYWEVPESEAPHEAQLTTVRTEETEKLSS.

Belongs to the ammonium transporter (TC 2.A.49) family. Rh subfamily.

The protein localises to the basolateral cell membrane. Its subcellular location is the cytoplasmic vesicle membrane. In terms of biological role, functions as an ammonia transporter. May play a role in the elimination of ammonia in the gill. This Tetraodon nigroviridis (Spotted green pufferfish) protein is Ammonium transporter Rh type B (rhbg).